A 277-amino-acid polypeptide reads, in one-letter code: Release factor glutamine methyltransferase (277 aa).

Residues 120 to 124, Asp143, Trp171, and Asn186 contribute to the S-adenosyl-L-methionine site; that span reads GTGSG. Residue 186–189 participates in substrate binding; it reads NPPY.

The protein belongs to the protein N5-glutamine methyltransferase family. PrmC subfamily.

It catalyses the reaction L-glutaminyl-[peptide chain release factor] + S-adenosyl-L-methionine = N(5)-methyl-L-glutaminyl-[peptide chain release factor] + S-adenosyl-L-homocysteine + H(+). Functionally, methylates the class 1 translation termination release factors RF1/PrfA and RF2/PrfB on the glutamine residue of the universally conserved GGQ motif. The protein is Release factor glutamine methyltransferase of Coxiella burnetii (strain RSA 493 / Nine Mile phase I).